An 846-amino-acid polypeptide reads, in one-letter code: Translation initiation factor IF-2 (846 aa).

Positions tyrosine 198–lysine 219 are disordered. A compositionally biased stretch (basic residues) spans serine 207–lysine 219. The region spanning serine 345–glutamate 512 is the tr-type G domain. Residues glycine 354–threonine 361 are G1. Glycine 354–threonine 361 serves as a coordination point for GTP. The segment at glycine 379 to histidine 383 is G2. Positions aspartate 400 to glycine 403 are G3. Residues aspartate 400–histidine 404 and asparagine 454–aspartate 457 contribute to the GTP site. The G4 stretch occupies residues asparagine 454 to aspartate 457. The interval serine 490–lysine 492 is G5.

The protein belongs to the TRAFAC class translation factor GTPase superfamily. Classic translation factor GTPase family. IF-2 subfamily.

Its subcellular location is the cytoplasm. Its function is as follows. One of the essential components for the initiation of protein synthesis. Protects formylmethionyl-tRNA from spontaneous hydrolysis and promotes its binding to the 30S ribosomal subunits. Also involved in the hydrolysis of GTP during the formation of the 70S ribosomal complex. In Francisella tularensis subsp. novicida (strain U112), this protein is Translation initiation factor IF-2.